The primary structure comprises 448 residues: UDP-N-acetylglucosamine--dolichyl-phosphate N-acetylglucosaminephosphotransferase (448 aa).

A helical transmembrane segment spans residues 24–44 (ALVAAVGFGIAGYLATDMLIP). Residues 58–60 (KDL) and Glu-70 each bind UDP-N-acetyl-alpha-D-glucosamine. The next 2 membrane-spanning stretches (helical) occupy residues 72–92 (IGAI…PFIF) and 129–149 (YLSA…DDLF). Lys-156 serves as a coordination point for dolichyl phosphate. 2 helical membrane passes run 157-177 (FFLP…DFGV) and 202-222 (YVYM…LAGV). 210–218 (IFCPNSINI) provides a ligand contact to dolichyl phosphate. Asn-217 is a Mg(2+) binding site. Asn-223 serves as a coordination point for UDP-N-acetyl-alpha-D-glucosamine. 4 helical membrane passes run 231 to 251 (IVLA…GPLA), 256 to 276 (HRFS…LWKW), 283 to 303 (VFVG…VGIL), and 309 to 329 (TMLL…PQLF). Position 287 (Asp-287) interacts with Mg(2+). Position 336–338 (336–338 (RHR)) interacts with UDP-N-acetyl-alpha-D-glucosamine. 2 consecutive transmembrane segments (helical) span residues 387–407 (EIIS…FGPM) and 419–439 (LQFC…AIIF).

It belongs to the glycosyltransferase 4 family. It depends on Mg(2+) as a cofactor.

It localises to the endoplasmic reticulum membrane. It catalyses the reaction a di-trans,poly-cis-dolichyl phosphate + UDP-N-acetyl-alpha-D-glucosamine = an N-acetyl-alpha-D-glucosaminyl-diphospho-di-trans,poly-cis-dolichol + UMP. It participates in protein modification; protein glycosylation. With respect to regulation, inhibited by natural nucleoside antibiotic tunicamycin, which acts as a structural analog and competitor of UDP-GlcNAc. Its function is as follows. UDP-N-acetylglucosamine--dolichyl-phosphate N-acetylglucosaminephosphotransferase that operates in the biosynthetic pathway of dolichol-linked oligosaccharides, the glycan precursors employed in protein asparagine (N)-glycosylation. The assembly of dolichol-linked oligosaccharides begins on the cytosolic side of the endoplasmic reticulum membrane and finishes in its lumen. The sequential addition of sugars to dolichol pyrophosphate produces dolichol-linked oligosaccharides containing fourteen sugars, including two GlcNAcs, nine mannoses and three glucoses. Once assembled, the oligosaccharide is transferred from the lipid to nascent proteins by oligosaccharyltransferases. Catalyzes the initial step of dolichol-linked oligosaccharide biosynthesis, transfering GlcNAc-1-P from cytosolic UDP-GlcNAc onto the carrier lipid dolichyl phosphate (P-dolichol), yielding GlcNAc-P-P-dolichol embedded in the cytoplasmic leaflet of the endoplasmic reticulum membrane. The protein is UDP-N-acetylglucosamine--dolichyl-phosphate N-acetylglucosaminephosphotransferase (ALG7) of Saccharomyces cerevisiae (strain ATCC 204508 / S288c) (Baker's yeast).